The following is a 269-amino-acid chain: Interleukin-1 beta (269 aa).

A propeptide spanning residues 1-112 (MAMVPEITCD…EEPITFKNCD (112 aa)) is cleaved from the precursor.

This sequence belongs to the IL-1 family. As to quaternary structure, monomer. In its precursor form, weakly interacts with full-length MEFV; the mature cytokine does not interact at all. Interacts with integrins ITGAV:ITGBV and ITGA5:ITGB1; integrin-binding is required for IL1B signaling. Interacts with cargo receptor TMED10; the interaction is direct and is required for the secretion of IL1B mature form. Interacts with HSP90AB1; the interaction facilitates cargo translocation into the ERGIC. Interacts with HSP90B1; the interaction facilitates cargo translocation into the ERGIC.

The protein resides in the cytoplasm. The protein localises to the cytosol. It localises to the secreted. It is found in the lysosome. Its subcellular location is the extracellular exosome. In terms of biological role, potent pro-inflammatory cytokine. Initially discovered as the major endogenous pyrogen, induces prostaglandin synthesis, neutrophil influx and activation, T-cell activation and cytokine production, B-cell activation and antibody production, and fibroblast proliferation and collagen production. Promotes Th17 differentiation of T-cells. Synergizes with IL12/interleukin-12 to induce IFNG synthesis from T-helper 1 (Th1) cells. Plays a role in angiogenesis by inducing VEGF production synergistically with TNF and IL6. Involved in transduction of inflammation downstream of pyroptosis: its mature form is specifically released in the extracellular milieu by passing through the gasdermin-D (GSDMD) pore. In Trichosurus vulpecula (Brush-tailed possum), this protein is Interleukin-1 beta (IL1B).